We begin with the raw amino-acid sequence, 523 residues long: UPF0329 protein ECU02_0050 (523 aa).

Residues 326–386 (EEKAKSKKRG…KTGKKSEGGR (61 aa)) are disordered. Positions 330 to 339 (KSKKRGKRKS) are enriched in basic residues. Positions 344-353 (EAKEEEKKES) are enriched in basic and acidic residues. Acidic residues predominate over residues 354-368 (ETEEVEAGEEVEMPS).

The protein belongs to the UPF0329 family.

This Encephalitozoon cuniculi (strain GB-M1) (Microsporidian parasite) protein is UPF0329 protein ECU02_0050.